The following is a 694-amino-acid chain: Elongation factor G (694 aa).

The tr-type G domain occupies 8–287 (EDYRNFGIMA…AVVSYLPSPI (280 aa)). Residues 17 to 24 (AHIDAGKT), 86 to 90 (DTPGH), and 140 to 143 (NKMD) each bind GTP.

The protein belongs to the TRAFAC class translation factor GTPase superfamily. Classic translation factor GTPase family. EF-G/EF-2 subfamily.

Its subcellular location is the cytoplasm. In terms of biological role, catalyzes the GTP-dependent ribosomal translocation step during translation elongation. During this step, the ribosome changes from the pre-translocational (PRE) to the post-translocational (POST) state as the newly formed A-site-bound peptidyl-tRNA and P-site-bound deacylated tRNA move to the P and E sites, respectively. Catalyzes the coordinated movement of the two tRNA molecules, the mRNA and conformational changes in the ribosome. This is Elongation factor G from Bartonella tribocorum (strain CIP 105476 / IBS 506).